A 422-amino-acid polypeptide reads, in one-letter code: MVDLIARDDSVDTCQASNGYNGHAGLRILAVFIILISSGLGVYFPILSSRYSFIRLPNWCFFIAKFFGSGVIVATAFVHLLQPAAEALGDECLGGTFAEYPWAFGICLMSLFLLFFTEIITHYFVAKTLGHDHGDHGEVTSIDVDAPSSGFVIRNMDSDPVSFNNEAAYSIHNDKTPYTTRNEEIVATPIKEKEPGSNVTNYDLEPGKTESLANELVPTSSHATNLASVPGKDHYSHENDHQDVSQLATRIEEEDKEQYLNQILAVFILEFGIIFHSVFVGLSLSVAGEEFETLFIVLTFHQMFEGLGLGTRVAETNWPESKKYMPWLMGLAFTLTSPIAVAVGIGVRHSWIPGSRRALIANGVFDSISSGILIYTGLVELMAHEFLYSNQFKGPDGLKKMLSAYLIMCCGAALMALLGKWA.

The Extracellular portion of the chain corresponds to 1–27 (MVDLIARDDSVDTCQASNGYNGHAGLR). The helical transmembrane segment at 28–48 (ILAVFIILISSGLGVYFPILS) threads the bilayer. Topologically, residues 49–60 (SRYSFIRLPNWC) are cytoplasmic. A helical transmembrane segment spans residues 61–81 (FFIAKFFGSGVIVATAFVHLL). Residues 82-99 (QPAAEALGDECLGGTFAE) lie on the Extracellular side of the membrane. Residues 100–120 (YPWAFGICLMSLFLLFFTEII) traverse the membrane as a helical segment. Residues 121–262 (THYFVAKTLG…EEDKEQYLNQ (142 aa)) are Cytoplasmic-facing. Phosphoserine occurs at positions 148, 149, 162, and 170. At T188 the chain carries Phosphothreonine. The helical transmembrane segment at 263 to 283 (ILAVFILEFGIIFHSVFVGLS) threads the bilayer. Residues 284–290 (LSVAGEE) are Extracellular-facing. The helical transmembrane segment at 291-311 (FETLFIVLTFHQMFEGLGLGT) threads the bilayer. Residues 312–326 (RVAETNWPESKKYMP) are Cytoplasmic-facing. Residues 327-347 (WLMGLAFTLTSPIAVAVGIGV) traverse the membrane as a helical segment. Residues 348–358 (RHSWIPGSRRA) lie on the Extracellular side of the membrane. Residues 359-379 (LIANGVFDSISSGILIYTGLV) form a helical membrane-spanning segment. The Cytoplasmic segment spans residues 380–400 (ELMAHEFLYSNQFKGPDGLKK). The chain crosses the membrane as a helical span at residues 401–421 (MLSAYLIMCCGAALMALLGKW). A422 is a topological domain (extracellular).

It belongs to the ZIP transporter (TC 2.A.5) family.

It is found in the membrane. Low-affinity zinc transport protein. Active in zinc-replete cells and is time-, temperature- and concentration-dependent and prefers zinc over other metals as its substrate. The sequence is that of Zinc-regulated transporter 2 (ZRT2) from Saccharomyces cerevisiae (strain ATCC 204508 / S288c) (Baker's yeast).